We begin with the raw amino-acid sequence, 906 residues long: Protein translocase subunit SecA (906 aa).

Residues Gln-87, 105-109 (GEGKT), and Asp-512 each bind ATP. Positions 875–897 (VTFVRDEQKVGRNDPCPCGSGKK) are disordered. Cys-890, Cys-892, Cys-901, and His-902 together coordinate Zn(2+).

This sequence belongs to the SecA family. Monomer and homodimer. Part of the essential Sec protein translocation apparatus which comprises SecA, SecYEG and auxiliary proteins SecDF-YajC and YidC. The cofactor is Zn(2+).

The protein localises to the cell inner membrane. It is found in the cytoplasm. The catalysed reaction is ATP + H2O + cellular proteinSide 1 = ADP + phosphate + cellular proteinSide 2.. In terms of biological role, part of the Sec protein translocase complex. Interacts with the SecYEG preprotein conducting channel. Has a central role in coupling the hydrolysis of ATP to the transfer of proteins into and across the cell membrane, serving both as a receptor for the preprotein-SecB complex and as an ATP-driven molecular motor driving the stepwise translocation of polypeptide chains across the membrane. The chain is Protein translocase subunit SecA from Aeromonas hydrophila subsp. hydrophila (strain ATCC 7966 / DSM 30187 / BCRC 13018 / CCUG 14551 / JCM 1027 / KCTC 2358 / NCIMB 9240 / NCTC 8049).